The primary structure comprises 275 residues: Transcription factor Ovo-like 2 (275 aa).

Positions 15 to 101 are disordered; that stretch reads SVRSWDELPD…GHLATKQRPV (87 aa). Basic and acidic residues-rich tracts occupy residues 18-29 and 39-49; these read SWDELPDEKRAD and LLHDPPEDCRS. Over residues 56–76 the composition is skewed to low complexity; that stretch reads GSGSSSAGEPGGAESSSSPHA. The span at 80 to 89 shows a compositional bias: acidic residues; the sequence is ETPEPGDAEG. 4 C2H2-type zinc fingers span residues 119–141, 147–169, 175–198, and 214–237; these read HSCD…LKCH, HLCT…VRTH, YKCN…KKIH, and YVCE…NSAH. The residue at position 269 (Ser-269) is a Phosphoserine.

This sequence belongs to the krueppel C2H2-type zinc-finger protein family. As to quaternary structure, interacts (via zinc-finger domains) with CEBPA (via bZIP domain); the interaction inhibits the transcription factor activity of CEBPA and is required to repress adipogenesis. As to expression, expressed in testis, ovary, heart and skeletal muscle. Expressed in the cornea, but absent from the corneal endothelium.

It localises to the nucleus. Zinc-finger transcription repressor factor. Plays a critical role in maintaining the identity of epithelial lineages by suppressing epithelial-to mesenchymal transition (EMT) mainly through the repression of ZEB1, an EMT inducer. Positively regulates neuronal differentiation. Suppresses cell cycling and terminal differentiation of keratinocytes by directly repressing MYC and NOTCH1. Important for the correct development of primordial germ cells in embryos. Plays dual functions in thermogenesis and adipogenesis to maintain energy balance. Essential for brown/beige adipose tissue-mediated thermogenesis, is necessary for the development of brown adipocytes. In white adipose tissues, limits adipogenesis by blocking CEBPA binding to its transcriptional targets and inhibiting its transcription factor activity. The sequence is that of Transcription factor Ovo-like 2 from Homo sapiens (Human).